The sequence spans 528 residues: MSQTSLKKERDPSILILDFGSQYSELIARRIRETNVFSLVVSNCISIEEINDINPKGIILSGGPNSVYEKNAPKCDEKIFNLGIPILGICYGMQLMVKELGGSVTSATKKAEYGRAPINIDQESELLSDVEDKSIMWMSHGDSINCLPDGFNKIAHTENTLHAAISNDRKKLFGVQFHPEVIHSEFGITVIKNFVYGISSCVADWTTETYIEETIPRIRDQVGNKKVLLALSGGVDSSTLAFLLNKAIGNQLTCMFIDQGFMRKGEPEFLMNFFDKKFHIKVEYINARERFISKLKGITDPEQKRKIIGEEFIRVFEEESNRLGPFQYLAQGTLYPDVIESAGTNIDPKTGERIAVKIKSHHNVGGLPKDLQFKLVEPLRKLFKDEVRKLGAALGLPDEIIKRHPFPGPGLAIRILGEVNNEKLDCLRDADWIVRDEIKKAGLYNDIWQAFAVLLPVKTVGVMGDKRTYAWPIVLRCVSSEDGMTADWSKIPFPILERISNRIVNEVVSVNRVVYDITSKPPGTIEWE.

A Glutamine amidotransferase type-1 domain is found at 13-204; it reads SILILDFGSQ…VYGISSCVAD (192 aa). C90 acts as the Nucleophile in catalysis. Catalysis depends on residues H178 and E180. The 199-residue stretch at 205-403 folds into the GMPS ATP-PPase domain; sequence WTTETYIEET…LGLPDEIIKR (199 aa). Residue 232–238 participates in ATP binding; sequence SGGVDSS.

In terms of assembly, homodimer.

The catalysed reaction is XMP + L-glutamine + ATP + H2O = GMP + L-glutamate + AMP + diphosphate + 2 H(+). The protein operates within purine metabolism; GMP biosynthesis; GMP from XMP (L-Gln route): step 1/1. In terms of biological role, catalyzes the synthesis of GMP from XMP. The chain is GMP synthase [glutamine-hydrolyzing] from Prochlorococcus marinus (strain MIT 9312).